Here is a 348-residue protein sequence, read N- to C-terminus: Phosphate acyltransferase (348 aa).

Belongs to the PlsX family. In terms of assembly, homodimer. Probably interacts with PlsY.

It localises to the cytoplasm. It catalyses the reaction a fatty acyl-[ACP] + phosphate = an acyl phosphate + holo-[ACP]. The protein operates within lipid metabolism; phospholipid metabolism. Functionally, catalyzes the reversible formation of acyl-phosphate (acyl-PO(4)) from acyl-[acyl-carrier-protein] (acyl-ACP). This enzyme utilizes acyl-ACP as fatty acyl donor, but not acyl-CoA. This is Phosphate acyltransferase from Neisseria gonorrhoeae (strain ATCC 700825 / FA 1090).